The sequence spans 252 residues: Cell division protein ZapD (252 aa).

Belongs to the ZapD family. In terms of assembly, interacts with FtsZ.

The protein resides in the cytoplasm. Its function is as follows. Cell division factor that enhances FtsZ-ring assembly. Directly interacts with FtsZ and promotes bundling of FtsZ protofilaments, with a reduction in FtsZ GTPase activity. The polypeptide is Cell division protein ZapD (Cupriavidus metallidurans (strain ATCC 43123 / DSM 2839 / NBRC 102507 / CH34) (Ralstonia metallidurans)).